Here is a 600-residue protein sequence, read N- to C-terminus: Mediator of RNA polymerase II transcription subunit 26 (600 aa).

One can recognise a TFIIS N-terminal domain in the interval 10–87; the sequence is QIRDRLLQAI…RSWQKLIEPA (78 aa). Disordered regions lie at residues 99-330, 348-402, and 431-461; these read GATG…RRLE, HQRL…PRDY, and TRQIKPLTQKEPVRADSPVHMEQQSRTELDK. Positions 123-133 are enriched in basic and acidic residues; that stretch reads SIHDLKSRNDL. Over residues 175 to 197 the composition is skewed to polar residues; it reads PNSSPLPTNGISGSPESFASSLD. Over residues 207 to 218 the composition is skewed to basic and acidic residues; sequence SRLERDENDKHS. The segment covering 314–324 has biased composition (pro residues); it reads SPLPLAQPSTP. The segment covering 441-461 has biased composition (basic and acidic residues); it reads EPVRADSPVHMEQQSRTELDK. Phosphoserine is present on residues Ser-447, Ser-470, and Ser-535.

The protein belongs to the Mediator complex subunit 26 family. As to quaternary structure, component of the Mediator complex, which is composed of MED1, MED4, MED6, MED7, MED8, MED9, MED10, MED11, MED12, MED13, MED13L, MED14, MED15, MED16, MED17, MED18, MED19, MED20, MED21, MED22, MED23, MED24, MED25, MED26, MED27, MED29, MED30, MED31, CCNC, CDK8 and CDC2L6/CDK11. The MED12, MED13, CCNC and CDK8 subunits form a distinct module termed the CDK8 module. Mediator containing the CDK8 module is less active than Mediator lacking this module in supporting transcriptional activation. Individual preparations of the Mediator complex lacking one or more distinct subunits have been variously termed ARC, CRSP, DRIP, PC2, SMCC and TRAP. Interacts with CEBPB (when not methylated).

Its subcellular location is the nucleus. Its function is as follows. Component of the Mediator complex, a coactivator involved in the regulated transcription of nearly all RNA polymerase II-dependent genes. Mediator functions as a bridge to convey information from gene-specific regulatory proteins to the basal RNA polymerase II transcription machinery. Mediator is recruited to promoters by direct interactions with regulatory proteins and serves as a scaffold for the assembly of a functional pre-initiation complex with RNA polymerase II and the general transcription factors. The sequence is that of Mediator of RNA polymerase II transcription subunit 26 (MED26) from Homo sapiens (Human).